Reading from the N-terminus, the 112-residue chain is Large ribosomal subunit protein bL17 (112 aa).

This sequence belongs to the bacterial ribosomal protein bL17 family. In terms of assembly, part of the 50S ribosomal subunit. Contacts protein L32.

The chain is Large ribosomal subunit protein bL17 from Heliobacterium modesticaldum (strain ATCC 51547 / Ice1).